Here is a 362-residue protein sequence, read N- to C-terminus: MAGNSFGQLFRVTTFGESHGLALGAVVDGCPPGLEISEADLQIDLDRRKPGTSRYTTPRREPDEVKILSGVFEGRTTGTSIGLLIENTDQRSKDYSDIKDVFRPGHADYTYHQKYGQRDYRGGGRSSARETAMRVAAGAIAKKYLKQMHGIEITGFLSQLGPIKAEGFDAAQIEQNPFFFPDAGKLEELDQYMRDLKKEGNSVGAKVQVIATKVPVGLGEPVFDRLDADIAHAMMGINAVKGVEIGDGFAVVEQKGSEHRDEMTPAGFASNHAGGILGGISSGQDIVVSMALKPTSSITVPGKTINTEGEAIEMITKGRHDPCVGIRAVPIAEAMLALVLMDHLLRHRAQNQGVMTQTPQLR.

NADP(+) contacts are provided by R48 and R54. FMN-binding positions include 125 to 127, 238 to 239, G278, 293 to 297, and R319; these read RSS, NA, and KPTSS.

Belongs to the chorismate synthase family. Homotetramer. FMNH2 serves as cofactor.

It carries out the reaction 5-O-(1-carboxyvinyl)-3-phosphoshikimate = chorismate + phosphate. It participates in metabolic intermediate biosynthesis; chorismate biosynthesis; chorismate from D-erythrose 4-phosphate and phosphoenolpyruvate: step 7/7. Functionally, catalyzes the anti-1,4-elimination of the C-3 phosphate and the C-6 proR hydrogen from 5-enolpyruvylshikimate-3-phosphate (EPSP) to yield chorismate, which is the branch point compound that serves as the starting substrate for the three terminal pathways of aromatic amino acid biosynthesis. This reaction introduces a second double bond into the aromatic ring system. The protein is Chorismate synthase of Aeromonas salmonicida (strain A449).